The primary structure comprises 442 residues: GTPase Der (442 aa).

2 EngA-type G domains span residues 2 to 168 and 182 to 356; these read ATVL…EEAG and LKVA…EKID. Residues 8 to 15, 55 to 59, 118 to 121, 188 to 195, 235 to 239, and 301 to 304 contribute to the GTP site; these read GRPNVGKS, DTCGL, NKVE, GKPNAGKS, DTAGM, and NKSD. The KH-like domain occupies 357–442; sequence LRIPTGLLNN…PIFIKLRRKK (86 aa).

The protein belongs to the TRAFAC class TrmE-Era-EngA-EngB-Septin-like GTPase superfamily. EngA (Der) GTPase family. In terms of assembly, associates with the 50S ribosomal subunit.

In terms of biological role, GTPase that plays an essential role in the late steps of ribosome biogenesis. The chain is GTPase Der from Kosmotoga olearia (strain ATCC BAA-1733 / DSM 21960 / TBF 19.5.1).